The primary structure comprises 122 residues: Fluoride-specific ion channel FluC (122 aa).

Transmembrane regions (helical) follow at residues 5 to 25, 29 to 49, 65 to 85, and 93 to 113; these read FLIGIGGFTGAVLRYVISGII, FGIPTGTLMVNLIGSFIVGFL, FIITGFCGALTTFSTFSYESF, and FIKSGINILTNVTGCISMIYF. Positions 72 and 75 each coordinate Na(+).

This sequence belongs to the fluoride channel Fluc/FEX (TC 1.A.43) family.

It localises to the cell membrane. It carries out the reaction fluoride(in) = fluoride(out). With respect to regulation, na(+) is not transported, but it plays an essential structural role and its presence is essential for fluoride channel function. Functionally, fluoride-specific ion channel. Important for reducing fluoride concentration in the cell, thus reducing its toxicity. The chain is Fluoride-specific ion channel FluC from Methanococcus vannielii (strain ATCC 35089 / DSM 1224 / JCM 13029 / OCM 148 / SB).